Reading from the N-terminus, the 483-residue chain is Protein P55 (483 aa).

A helical transmembrane segment spans residues 342–359 (LTPVMALIIILVYYSIYG).

The protein resides in the host membrane. This chain is Protein P55, found in Vitis vinifera (Grape).